A 185-amino-acid polypeptide reads, in one-letter code: MIKETIEDAKDRMEKSVESLRSQMSKVRTGRAHPSILDSVMVNYYGTDTPLKQLANITTEDSRTLALTVFDKSASAAVEKAIINSDLGLNPASAGAVIRIPLPPLTEERRRDLVKIVRAEAENGRIAVRNIRRDANGDIKDLLKEKEITEDEERNAEEEIQKLTDKFVKQIDEALKAKEADLMEI.

It belongs to the RRF family.

It is found in the cytoplasm. Responsible for the release of ribosomes from messenger RNA at the termination of protein biosynthesis. May increase the efficiency of translation by recycling ribosomes from one round of translation to another. This is Ribosome-recycling factor from Idiomarina loihiensis (strain ATCC BAA-735 / DSM 15497 / L2-TR).